The following is a 201-amino-acid chain: Recombination protein RecR (201 aa).

The segment at 60-75 (CSCCGNVDTIDPCTVC) adopts a C4-type zinc-finger fold. In terms of domain architecture, Toprim spans 83–178 (AVIIVVEDVA…RITRLAHGVP (96 aa)).

Belongs to the RecR family.

In terms of biological role, may play a role in DNA repair. It seems to be involved in an RecBC-independent recombinational process of DNA repair. It may act with RecF and RecO. This chain is Recombination protein RecR, found in Rhizobium meliloti (strain 1021) (Ensifer meliloti).